The chain runs to 114 residues: MNKLIDEITKGQLNPDVPSFRPGDTVRVHAKVVEGTRERIQLFEGVVIKRRGAGISETFTVRKISNSVGVERTFPVHTPRIAKLEVIRRGKVRRAKLYYLRNLRGKAARIKEIR.

This sequence belongs to the bacterial ribosomal protein bL19 family.

In terms of biological role, this protein is located at the 30S-50S ribosomal subunit interface and may play a role in the structure and function of the aminoacyl-tRNA binding site. The protein is Large ribosomal subunit protein bL19 of Listeria welshimeri serovar 6b (strain ATCC 35897 / DSM 20650 / CCUG 15529 / CIP 8149 / NCTC 11857 / SLCC 5334 / V8).